The chain runs to 1273 residues: Kinesin-like protein KIN-14A (1273 aa).

Positions 1–52 (MADQRSKTNRWNWEVSGFEPRKSSSNASFAESTGHRTTGPLLRRNSISTPSL) are disordered. Positions 59–89 (ASKVNGLKEKVKLAKEDYLELRQEATDLQEY) form a coiled coil. Positions 142–456 (NIKVFCRARP…LNYAARARNT (315 aa)) constitute a Kinesin motor domain. Residue 223–230 (GQTNAGKT) coordinates ATP. Coiled-coil stretches lie at residues 466-511 (IKKW…CVLL), 559-595 (QLDQEQKLQMQQQDSAIQNLQAKITDLESQVSEAVRS), and 627-657 (TKKLEEELKKRDALIERLHEENEKLFDRLTE). Disordered regions lie at residues 827–847 (KPNTGRSKSTSRGSSPGRSPV) and 1136–1157 (QEDTNILEQSHDRRPSLESISS). Low complexity predominate over residues 830–846 (TGRSKSTSRGSSPGRSP).

Belongs to the TRAFAC class myosin-kinesin ATPase superfamily. Kinesin family. KIN-14 subfamily. As to quaternary structure, homodimer and heterodimer with KCA2. Interacts with CDKA-1. Interacts with AL1, a geminivirus (TGMV) protein essential for viral replication. Interacts with LUE1/KSS. In terms of processing, part of the phosphorylation is not CDK-dependent. In terms of tissue distribution, widely expressed.

It is found in the nucleus. The protein resides in the cytoplasm. Its subcellular location is the cytoskeleton. The protein localises to the spindle. It localises to the chromosome. It is found in the cell membrane. The protein resides in the phragmoplast. Functionally, kinesin-like protein required for chloroplast movements and anchor to the plasma membrane. Mediates chloroplast movement via chloroplast actin (cp-actin) filaments. Required for the chloroplast avoidance response under high intensity blue light. Mediates redundantly with CHUP1 the nuclear avoidance response under high intensity blue light. May act as a mitotic kinesin. Probably involved in division plane determination. In Arabidopsis thaliana (Mouse-ear cress), this protein is Kinesin-like protein KIN-14A.